Here is a 309-residue protein sequence, read N- to C-terminus: uncharacterized protein (309 aa).

Basic residues predominate over residues 1–16; that stretch reads MAGNSRRRGAVRKAGT. The disordered stretch occupies residues 1–70; the sequence is MAGNSRRRGA…AKRTEETETV (70 aa). Residues glycine 261, isoleucine 281, and leucine 290 each contribute to the S-adenosyl-L-methionine site.

The protein belongs to the class IV-like SAM-binding methyltransferase superfamily. RNA methyltransferase TrmH family.

This is an uncharacterized protein from Mycolicibacterium paratuberculosis (strain ATCC BAA-968 / K-10) (Mycobacterium paratuberculosis).